Here is a 433-residue protein sequence, read N- to C-terminus: Dihydrolipoyllysine-residue acetyltransferase component of pyruvate dehydrogenase complex (433 aa).

One can recognise a Lipoyl-binding domain in the interval Ala2–Asp77. Lys43 bears the N6-lipoyllysine mark. 2 disordered regions span residues Asp80–Arg134 and Tyr164–Thr204. Basic and acidic residues-rich tracts occupy residues Met84–Glu103 and Glu117–Thr126. One can recognise a Peripheral subunit-binding (PSBD) domain in the interval Lys128–Leu165. Residues Asn166 to Ser185 show a composition bias toward low complexity. His404 is a catalytic residue.

The protein belongs to the 2-oxoacid dehydrogenase family. As to quaternary structure, forms a 24-polypeptide structural core with octahedral symmetry. (R)-lipoate is required as a cofactor.

The catalysed reaction is N(6)-[(R)-dihydrolipoyl]-L-lysyl-[protein] + acetyl-CoA = N(6)-[(R)-S(8)-acetyldihydrolipoyl]-L-lysyl-[protein] + CoA. In terms of biological role, the pyruvate dehydrogenase complex catalyzes the overall conversion of pyruvate to acetyl-CoA and CO(2). It contains multiple copies of three enzymatic components: pyruvate dehydrogenase (E1), dihydrolipoamide acetyltransferase (E2) and lipoamide dehydrogenase (E3). The polypeptide is Dihydrolipoyllysine-residue acetyltransferase component of pyruvate dehydrogenase complex (pdhC) (Staphylococcus epidermidis (strain ATCC 35984 / DSM 28319 / BCRC 17069 / CCUG 31568 / BM 3577 / RP62A)).